Consider the following 66-residue polypeptide: Potassium channel toxin alpha-KTx (66 aa).

The N-terminal stretch at 1–21 is a signal peptide; sequence MNTKVVLIMLMITSVILVVEA. 4 cysteine pairs are disulfide-bonded: Cys29–Cys49, Cys35–Cys59, Cys39–Cys61, and Cys44–Cys64.

The protein belongs to the short scorpion toxin superfamily. Potassium channel inhibitor family. In terms of tissue distribution, expressed by the venom gland.

The protein resides in the secreted. Blocks voltage-gated potassium channels. The polypeptide is Potassium channel toxin alpha-KTx (Hoffmannihadrurus gertschi (Scorpion)).